A 625-amino-acid polypeptide reads, in one-letter code: Probable potassium transport system protein Kup 1 (625 aa).

Helical transmembrane passes span 14 to 34 (LSLL…TSPL), 50 to 70 (AAAV…ITTV), 104 to 124 (IVAL…ITPA), 139 to 159 (PALQ…LFAI), 170 to 190 (LFGP…LVGI), 213 to 233 (GATG…AEAL), 249 to 269 (WFAV…ALVI), 287 to 307 (LLLP…QSVI), 339 to 359 (IYVG…TIGF), 368 to 388 (AYGI…FIAM), 396 to 416 (LLAA…FFLA), and 421 to 441 (IAEG…LMWI).

It belongs to the HAK/KUP transporter (TC 2.A.72) family.

The protein localises to the cell inner membrane. It carries out the reaction K(+)(in) + H(+)(in) = K(+)(out) + H(+)(out). Transport of potassium into the cell. Likely operates as a K(+):H(+) symporter. The polypeptide is Probable potassium transport system protein Kup 1 (Bradyrhizobium sp. (strain ORS 278)).